We begin with the raw amino-acid sequence, 290 residues long: Lipoyl synthase (290 aa).

[4Fe-4S] cluster-binding residues include Cys-32, Cys-37, Cys-43, Cys-58, Cys-62, Cys-65, and Ser-272. Positions 44–261 (WGEGTATFMI…KEVAVSLGFK (218 aa)) constitute a Radical SAM core domain.

It belongs to the radical SAM superfamily. Lipoyl synthase family. Requires [4Fe-4S] cluster as cofactor.

It localises to the cytoplasm. It carries out the reaction [[Fe-S] cluster scaffold protein carrying a second [4Fe-4S](2+) cluster] + N(6)-octanoyl-L-lysyl-[protein] + 2 oxidized [2Fe-2S]-[ferredoxin] + 2 S-adenosyl-L-methionine + 4 H(+) = [[Fe-S] cluster scaffold protein] + N(6)-[(R)-dihydrolipoyl]-L-lysyl-[protein] + 4 Fe(3+) + 2 hydrogen sulfide + 2 5'-deoxyadenosine + 2 L-methionine + 2 reduced [2Fe-2S]-[ferredoxin]. The protein operates within protein modification; protein lipoylation via endogenous pathway; protein N(6)-(lipoyl)lysine from octanoyl-[acyl-carrier-protein]: step 2/2. Catalyzes the radical-mediated insertion of two sulfur atoms into the C-6 and C-8 positions of the octanoyl moiety bound to the lipoyl domains of lipoate-dependent enzymes, thereby converting the octanoylated domains into lipoylated derivatives. This chain is Lipoyl synthase, found in Pyrobaculum aerophilum (strain ATCC 51768 / DSM 7523 / JCM 9630 / CIP 104966 / NBRC 100827 / IM2).